The sequence spans 382 residues: D-galactonate dehydratase (382 aa).

Aspartate 183 provides a ligand contact to Mg(2+). The Proton donor role is filled by histidine 185. Mg(2+) contacts are provided by glutamate 209 and glutamate 235. Histidine 285 serves as the catalytic Proton acceptor.

It belongs to the mandelate racemase/muconate lactonizing enzyme family. GalD subfamily. It depends on Mg(2+) as a cofactor.

It catalyses the reaction D-galactonate = 2-dehydro-3-deoxy-D-galactonate + H2O. It functions in the pathway carbohydrate acid metabolism; D-galactonate degradation; D-glyceraldehyde 3-phosphate and pyruvate from D-galactonate: step 1/3. Its function is as follows. Catalyzes the dehydration of D-galactonate to 2-keto-3-deoxy-D-galactonate. The polypeptide is D-galactonate dehydratase (Klebsiella pneumoniae (strain 342)).